Consider the following 968-residue polypeptide: RNA polymerase-associated protein RapA (968 aa).

One can recognise a Helicase ATP-binding domain in the interval 163-332; sequence EVGRRYAPRV…FARLRLLDPD (170 aa). 176–183 serves as a coordination point for ATP; it reads DEVGLGKT. A DEAH box motif is present at residues 278 to 281; the sequence is DEAH. One can recognise a Helicase C-terminal domain in the interval 491 to 643; the sequence is RVDWLIAFLK…ELTCPSGHVL (153 aa).

The protein belongs to the SNF2/RAD54 helicase family. RapA subfamily. Interacts with the RNAP. Has a higher affinity for the core RNAP than for the holoenzyme. Its ATPase activity is stimulated by binding to RNAP.

In terms of biological role, transcription regulator that activates transcription by stimulating RNA polymerase (RNAP) recycling in case of stress conditions such as supercoiled DNA or high salt concentrations. Probably acts by releasing the RNAP, when it is trapped or immobilized on tightly supercoiled DNA. Does not activate transcription on linear DNA. Probably not involved in DNA repair. In Shewanella sp. (strain W3-18-1), this protein is RNA polymerase-associated protein RapA.